We begin with the raw amino-acid sequence, 205 residues long: Methylthioribulose-1-phosphate dehydratase (205 aa).

H96 and H98 together coordinate Zn(2+).

It belongs to the aldolase class II family. MtnB subfamily. Requires Zn(2+) as cofactor.

It catalyses the reaction 5-(methylsulfanyl)-D-ribulose 1-phosphate = 5-methylsulfanyl-2,3-dioxopentyl phosphate + H2O. It functions in the pathway amino-acid biosynthesis; L-methionine biosynthesis via salvage pathway; L-methionine from S-methyl-5-thio-alpha-D-ribose 1-phosphate: step 2/6. Functionally, catalyzes the dehydration of methylthioribulose-1-phosphate (MTRu-1-P) into 2,3-diketo-5-methylthiopentyl-1-phosphate (DK-MTP-1-P). In Pseudomonas aeruginosa (strain ATCC 15692 / DSM 22644 / CIP 104116 / JCM 14847 / LMG 12228 / 1C / PRS 101 / PAO1), this protein is Methylthioribulose-1-phosphate dehydratase.